The following is a 450-amino-acid chain: Phosphoglucosamine mutase (450 aa).

The active-site Phosphoserine intermediate is the S102. Mg(2+)-binding residues include S102, D244, D246, and D248. S102 is modified (phosphoserine).

It belongs to the phosphohexose mutase family. Mg(2+) is required as a cofactor. Post-translationally, activated by phosphorylation.

It catalyses the reaction alpha-D-glucosamine 1-phosphate = D-glucosamine 6-phosphate. Catalyzes the conversion of glucosamine-6-phosphate to glucosamine-1-phosphate. In Nitratidesulfovibrio vulgaris (strain DSM 19637 / Miyazaki F) (Desulfovibrio vulgaris), this protein is Phosphoglucosamine mutase.